We begin with the raw amino-acid sequence, 1439 residues long: Probable histone acetyltransferase HAC-like 2 (1439 aa).

Disordered stretches follow at residues 1 to 43 (MKQG…ASAD) and 313 to 335 (YGIS…TPTP). Positions 325–335 (VNPSTRSTPTP) are enriched in polar residues. The segment at 607–687 (ENTKQYHAQA…NEHCHVCCKA (81 aa)) adopts a TAZ-type zinc-finger fold. The PHD-type; degenerate zinc-finger motif lies at 827 to 933 (KIHCHVQQET…EYTCFKCYIE (107 aa)). A CBP/p300-type HAT domain is found at 948–1383 (VRGAKDLPRT…MLYHLHNPTG (436 aa)). Residues 964–989 (EERLFKRLREERQERANKLKTSLDEV) adopt a coiled-coil conformation. Acetyl-CoA-binding positions include 1071-1073 (LDS), 1090-1091 (RT), and Trp1146. The ZZ-type zinc finger occupies 1265-1328 (HLQYSCSHCC…ILHPVEIVGV (64 aa)). 8 residues coordinate Zn(2+): Cys1270, Cys1273, Cys1285, Cys1288, Cys1294, Cys1297, His1310, and His1318.

It is found in the nucleus. The enzyme catalyses L-lysyl-[protein] + acetyl-CoA = N(6)-acetyl-L-lysyl-[protein] + CoA + H(+). Acetyltransferase enzyme. Acetylates histones, giving a specific tag for transcriptional activation. This is Probable histone acetyltransferase HAC-like 2 from Oryza sativa subsp. japonica (Rice).